The primary structure comprises 360 residues: Geranylgeranyl pyrophosphate synthase 12, chloroplastic (360 aa).

A chloroplast-targeting transit peptide spans 1–39 (MANTVHLSSSSLFIQTRGRKYNSILSFNNLQKRTVLSLS). The isopentenyl diphosphate site is built by K106, R109, and H138. D145 and D151 together coordinate Mg(2+). Position 156 (R156) interacts with dimethylallyl diphosphate. R157 lines the isopentenyl diphosphate pocket. Dimethylallyl diphosphate is bound by residues K245, T246, Q283, K300, and K310.

Belongs to the FPP/GGPP synthase family. As to quaternary structure, monomer. It depends on Mg(2+) as a cofactor.

The protein localises to the plastid. The protein resides in the chloroplast. The catalysed reaction is isopentenyl diphosphate + dimethylallyl diphosphate = (2E)-geranyl diphosphate + diphosphate. It catalyses the reaction isopentenyl diphosphate + (2E)-geranyl diphosphate = (2E,6E)-farnesyl diphosphate + diphosphate. It carries out the reaction isopentenyl diphosphate + (2E,6E)-farnesyl diphosphate = (2E,6E,10E)-geranylgeranyl diphosphate + diphosphate. It participates in isoprenoid biosynthesis; farnesyl diphosphate biosynthesis; farnesyl diphosphate from geranyl diphosphate and isopentenyl diphosphate: step 1/1. Its pathway is isoprenoid biosynthesis; geranyl diphosphate biosynthesis; geranyl diphosphate from dimethylallyl diphosphate and isopentenyl diphosphate: step 1/1. It functions in the pathway isoprenoid biosynthesis; geranylgeranyl diphosphate biosynthesis; geranylgeranyl diphosphate from farnesyl diphosphate and isopentenyl diphosphate: step 1/1. Its function is as follows. Catalyzes the trans-addition of the three molecules of IPP onto DMAPP to form geranylgeranyl pyrophosphate. The polypeptide is Geranylgeranyl pyrophosphate synthase 12, chloroplastic (Arabidopsis thaliana (Mouse-ear cress)).